The following is a 190-amino-acid chain: Prostaglandin-H2 D-isomerase (190 aa).

The N-terminal stretch at 1–22 is a signal peptide; the sequence is MATHHTLWMGLALLGVLGDLQA. N-linked (GlcNAc...) asparagine glycosylation occurs at asparagine 51. Cysteine 65 serves as the catalytic Nucleophile. Asparagine 78 carries an N-linked (GlcNAc...) asparagine glycan. A disulfide bridge links cysteine 89 with cysteine 186.

Belongs to the calycin superfamily. Lipocalin family. Monomer.

The protein localises to the rough endoplasmic reticulum. The protein resides in the nucleus membrane. It is found in the golgi apparatus. Its subcellular location is the cytoplasm. It localises to the perinuclear region. The protein localises to the secreted. It catalyses the reaction prostaglandin H2 = prostaglandin D2. Functionally, catalyzes the conversion of PGH2 to PGD2, a prostaglandin involved in smooth muscle contraction/relaxation and a potent inhibitor of platelet aggregation. Involved in a variety of CNS functions, such as sedation, NREM sleep and PGE2-induced allodynia, and may have an anti-apoptotic role in oligodendrocytes. Binds small non-substrate lipophilic molecules, including biliverdin, bilirubin, retinal, retinoic acid and thyroid hormone, and may act as a scavenger for harmful hydrophobic molecules and as a secretory retinoid and thyroid hormone transporter. Possibly involved in development and maintenance of the blood-brain, blood-retina, blood-aqueous humor and blood-testis barrier. It is likely to play important roles in both maturation and maintenance of the central nervous system and male reproductive system. Involved in PLA2G3-dependent maturation of mast cells. PLA2G3 is secreted by immature mast cells and acts on nearby fibroblasts upstream to PTDGS to synthesize PGD2, which in turn promotes mast cell maturation and degranulation via PTGDR. This Gorilla gorilla gorilla (Western lowland gorilla) protein is Prostaglandin-H2 D-isomerase (PTGDS).